Consider the following 153-residue polypeptide: Transcription antitermination protein NusB (153 aa).

The protein belongs to the NusB family.

In terms of biological role, involved in transcription antitermination. Required for transcription of ribosomal RNA (rRNA) genes. Binds specifically to the boxA antiterminator sequence of the ribosomal RNA (rrn) operons. The polypeptide is Transcription antitermination protein NusB (Symbiobacterium thermophilum (strain DSM 24528 / JCM 14929 / IAM 14863 / T)).